We begin with the raw amino-acid sequence, 419 residues long: L-rhamnose isomerase (419 aa).

Residues histidine 262, aspartate 294, and aspartate 296 each coordinate Mn(2+).

The protein belongs to the rhamnose isomerase family. As to quaternary structure, homotetramer. Mn(2+) is required as a cofactor.

It localises to the cytoplasm. It catalyses the reaction L-rhamnopyranose = L-rhamnulose. It participates in carbohydrate degradation; L-rhamnose degradation; glycerone phosphate from L-rhamnose: step 1/3. Catalyzes the interconversion of L-rhamnose and L-rhamnulose. This Salmonella typhi protein is L-rhamnose isomerase.